The primary structure comprises 265 residues: Protein Rv2993c (265 aa).

Residues Glu-114, Glu-116, and Asp-145 each coordinate a divalent metal cation.

It in the C-terminal section; belongs to the FAH family. It depends on a divalent metal cation as a cofactor.

The protein is Protein Rv2993c of Mycobacterium tuberculosis (strain ATCC 25618 / H37Rv).